The chain runs to 301 residues: ATP synthase gamma chain (301 aa).

Belongs to the ATPase gamma chain family. F-type ATPases have 2 components, CF(1) - the catalytic core - and CF(0) - the membrane proton channel. CF(1) has five subunits: alpha(3), beta(3), gamma(1), delta(1), epsilon(1). CF(0) has three main subunits: a, b and c.

Its subcellular location is the cell inner membrane. Its function is as follows. Produces ATP from ADP in the presence of a proton gradient across the membrane. The gamma chain is believed to be important in regulating ATPase activity and the flow of protons through the CF(0) complex. The chain is ATP synthase gamma chain from Helicobacter acinonychis (strain Sheeba).